The chain runs to 460 residues: MLO-like protein 9 (460 aa).

Over 1-21 (MAGGGGGGGGEGPRQLDQTPT) the chain is Extracellular. The helical transmembrane segment at 22 to 42 (WAVSTVCGVIILISIILELII) threads the bilayer. Residues 43–67 (HKVGEVFERKKKKALFEALEKIKNE) are Cytoplasmic-facing. The helical transmembrane segment at 68–88 (LMVLGFISLLLTFGQNYIASI) threads the bilayer. At 89-158 (CVPSRYGHAM…ISLNALHQVH (70 aa)) the chain is on the extracellular side. Residues 159–179 (IFIFFLAVFHVIYSAITMMLG) traverse the membrane as a helical segment. Over 180–289 (RAKIRGWKVW…KVVVGIRPEL (110 aa)) the chain is Cytoplasmic. A helical transmembrane segment spans residues 290-310 (WAFVMLFLLFDVHGWYVTAVI). Over 311–315 (TMIPP) the chain is Extracellular. Residues 316–336 (LLTLAIGTKLQAIISYMALEI) traverse the membrane as a helical segment. At 337–366 (QERHAVIQGMPVVNVSDQHFWFEKPDLVLH) the chain is on the cytoplasmic side. The chain crosses the membrane as a helical span at residues 367-387 (MIHFVLFQNAFEITYFFWIWY). Residues 388 to 398 (EFGLRSCFHHH) are Extracellular-facing. The chain crosses the membrane as a helical span at residues 399–419 (FGLIIIRVCLGVGVQFLCSYI). Residues 420 to 460 (TLPLYALVTQMGSTMKRSVFDEQTSKALEQWHKKARKKNEK) are Cytoplasmic-facing. The calmodulin-binding stretch occupies residues 441–460 (EQTSKALEQWHKKARKKNEK).

This sequence belongs to the MLO family.

It is found in the membrane. May be involved in modulation of pathogen defense and leaf cell death. Activity seems to be regulated by Ca(2+)-dependent calmodulin binding and seems not to require heterotrimeric G proteins. This is MLO-like protein 9 (MLO9) from Arabidopsis thaliana (Mouse-ear cress).